The sequence spans 571 residues: Methionine--tRNA ligase (571 aa).

The 'HIGH' region signature appears at 10–20; that stretch reads PYVNAVPHLGN. Zn(2+) contacts are provided by cysteine 143, cysteine 146, cysteine 156, and cysteine 159. The 'KMSKS' region signature appears at 333-337; that stretch reads KFSKS. Lysine 336 is a binding site for ATP.

This sequence belongs to the class-I aminoacyl-tRNA synthetase family. MetG type 1 subfamily. The cofactor is Zn(2+).

It is found in the cytoplasm. The catalysed reaction is tRNA(Met) + L-methionine + ATP = L-methionyl-tRNA(Met) + AMP + diphosphate. In terms of biological role, is required not only for elongation of protein synthesis but also for the initiation of all mRNA translation through initiator tRNA(fMet) aminoacylation. In Sulfurisphaera tokodaii (strain DSM 16993 / JCM 10545 / NBRC 100140 / 7) (Sulfolobus tokodaii), this protein is Methionine--tRNA ligase.